The primary structure comprises 571 residues: Proline--tRNA ligase (571 aa).

It belongs to the class-II aminoacyl-tRNA synthetase family. ProS type 1 subfamily. In terms of assembly, homodimer.

Its subcellular location is the cytoplasm. The catalysed reaction is tRNA(Pro) + L-proline + ATP = L-prolyl-tRNA(Pro) + AMP + diphosphate. Its function is as follows. Catalyzes the attachment of proline to tRNA(Pro) in a two-step reaction: proline is first activated by ATP to form Pro-AMP and then transferred to the acceptor end of tRNA(Pro). As ProRS can inadvertently accommodate and process non-cognate amino acids such as alanine and cysteine, to avoid such errors it has two additional distinct editing activities against alanine. One activity is designated as 'pretransfer' editing and involves the tRNA(Pro)-independent hydrolysis of activated Ala-AMP. The other activity is designated 'posttransfer' editing and involves deacylation of mischarged Ala-tRNA(Pro). The misacylated Cys-tRNA(Pro) is not edited by ProRS. The chain is Proline--tRNA ligase from Shewanella putrefaciens (strain CN-32 / ATCC BAA-453).